A 583-amino-acid chain; its full sequence is Interactor of constitutive active ROPs 2, chloroplastic (583 aa).

Residues 1–55 constitute a chloroplast transit peptide; that stretch reads MQTPKPRPGSLEVPQKKSPASTPKTARKLKTSESDPVSSPNTKIRTPKTQSPKVV. 2 disordered regions span residues 1–80 and 101–125; these read MQTP…PELA and EALKKEAQDQAEETKQQLMEINASE. The segment covering 34–52 has biased composition (polar residues); sequence SDPVSSPNTKIRTPKTQSP. Coiled coils occupy residues 74–207 and 238–516; these read GKTP…DAKE and MKMS…AAAT. The segment covering 102-115 has biased composition (basic and acidic residues); sequence ALKKEAQDQAEETK. The disordered stretch occupies residues 518 to 583; that stretch reads LSGGNNNNNS…IGVLLKKSQK (66 aa). The span at 519–529 shows a compositional bias: low complexity; that stretch reads SGGNNNNNSNG. Ser-540 bears the Phosphoserine mark.

This sequence belongs to the ICR family. As to quaternary structure, interacts with ARAC8, ARAC11 and KIN13A in vitro, but not with ICR1 or SEC3A.

The protein resides in the plastid. It is found in the chloroplast. Its function is as follows. Acts as a scaffold, mediating interaction of ROPs with different proteins. In Arabidopsis thaliana (Mouse-ear cress), this protein is Interactor of constitutive active ROPs 2, chloroplastic (ICR2).